Consider the following 1026-residue polypeptide: HEAT repeat-containing protein 4 (1026 aa).

The segment at 135–175 (AVKTESSANPEKKLKKSKPASTVREAPRPLIHHPCMHPDML) is disordered. HEAT repeat units follow at residues 530-568 (LLPALEAALCDKNAHVRMAAAICQYAIQSHNPLARNIMQ), 724-760 (KLMTAKLLPSFLHCFSDDFTAVRRAACLAAGALQIRD), and 761-794 (KMVLECLLNLMQRDPYWKIKAFAIRALGQIGQVS).

The protein is HEAT repeat-containing protein 4 (HEATR4) of Homo sapiens (Human).